A 244-amino-acid chain; its full sequence is Cysteine-rich secretory protein 1 (244 aa).

The signal sequence occupies residues 1-19; the sequence is MALMLVLFFLAAVLPPSLL. An SCP domain is found at 44–170; it reads SKHNQLRRMV…PLRYYYVCHY (127 aa). Asn-145 carries an N-linked (GlcNAc...) asparagine glycan. 5 cysteine pairs are disulfide-bonded: Cys-190/Cys-197, Cys-193/Cys-202, Cys-206/Cys-239, Cys-215/Cys-233, and Cys-224/Cys-237. The region spanning 206-239 is the ShKT domain; that stretch reads CGHEDKYTNCKYLKKMLSCEHELLKKGCKATCLC.

This sequence belongs to the CRISP family. As to expression, mainly found in the cauda epididymis where it is synthesized by the principal cells and secreted into the lumen. Binds to the heads of spermatozoa. Also expressed in the submandibular gland.

The protein resides in the cytoplasmic vesicle. The protein localises to the secretory vesicle. In terms of biological role, this protein is supposed to help spermatozoa undergo functional maturation while they move from the testis to the ductus deferens. The polypeptide is Cysteine-rich secretory protein 1 (Crisp1) (Mus musculus (Mouse)).